A 437-amino-acid polypeptide reads, in one-letter code: Phosphoribosylamine--glycine ligase (437 aa).

The ATP-grasp domain maps to Lys-110–Asp-322. Glu-142–Ser-203 is an ATP binding site. Glu-292 and Asn-294 together coordinate Mg(2+).

The protein belongs to the GARS family. The cofactor is Mg(2+). Requires Mn(2+) as cofactor.

The enzyme catalyses 5-phospho-beta-D-ribosylamine + glycine + ATP = N(1)-(5-phospho-beta-D-ribosyl)glycinamide + ADP + phosphate + H(+). It functions in the pathway purine metabolism; IMP biosynthesis via de novo pathway; N(1)-(5-phospho-D-ribosyl)glycinamide from 5-phospho-alpha-D-ribose 1-diphosphate: step 2/2. This is Phosphoribosylamine--glycine ligase from Rhodopirellula baltica (strain DSM 10527 / NCIMB 13988 / SH1).